Here is a 538-residue protein sequence, read N- to C-terminus: Syncytin-1 (538 aa).

Residues 1–20 (MALPYHIFLFTVLLPSFTLT) form the signal peptide. Residues 21-443 (APPPCRCMTS…NTGPWGLLSQ (423 aa)) are Extracellular-facing. Residue Asn169 is glycosylated (N-linked (GlcNAc...) asparagine). Positions 186 to 189 (CWIC) match the CXXC motif. 3 disulfide bridges follow: Cys186-Cys189, Cys186-Cys405, and Cys397-Cys404. Residues Asn208, Asn214, Asn234, Asn242, and Asn281 are each glycosylated (N-linked (GlcNAc...) asparagine). The segment at 320 to 340 (ILPFVIGAGVLGALGTGIGGI) is fusion peptide. The segment at 380 to 396 (LQNRRALDLLTAERGGT) is immunosuppression. Positions 397–405 (CLFLGEECC) match the CX6CC motif. Asn409 carries an N-linked (GlcNAc...) asparagine glycan. A helical transmembrane segment spans residues 444–464 (WMPWILPFLGPLAAIILLLLF). Residues 465–484 (GPCIFNLLVNFVSSRIEAVK) form an essential for the fusiogenic function region. Residues 465–538 (GPCIFNLLVN…LLRPNSAGSS (74 aa)) lie on the Cytoplasmic side of the membrane. Residues 496-538 (KIYRRPLDRPASPRSDVNDIKGTPPEEILTAQPLLRPNSAGSS) are disordered.

It belongs to the gamma type-C retroviral envelope protein family. HERV class-I W env subfamily. The mature envelope protein (Env) consists of a trimer of SU-TM heterodimers attached probably by a labile interchain disulfide bond. Interacts with the C-type lectin CD209/DC-SIGN. In terms of processing, specific enzymatic cleavages in vivo yield mature proteins. Envelope glycoproteins are synthesized as an inactive precursor that is heavily N-glycosylated and processed likely by furin in the Golgi to yield the mature SU and TM proteins. The cleavage site between SU and TM requires the minimal sequence [KR]-X-[KR]-R. The CXXC motif is highly conserved across a broad range of retroviral envelope proteins. It is thought to participate in the formation of a labile disulfide bond possibly with the CX6CC motif present in the transmembrane protein.

It localises to the cell membrane. The protein localises to the virion. This endogenous retroviral envelope protein has retained its original fusogenic properties and participates in trophoblast fusion and the formation of a syncytium during placenta morphogenesis. May recognize and induce fusion through binding of SLC1A4 and SLC1A5. In terms of biological role, endogenous envelope proteins may have kept, lost or modified their original function during evolution. Retroviral envelope proteins mediate receptor recognition and membrane fusion during early infection. The surface protein (SU) mediates receptor recognition, while the transmembrane protein (TM) acts as a class I viral fusion protein. The protein may have at least 3 conformational states: pre-fusion native state, pre-hairpin intermediate state, and post-fusion hairpin state. During viral and target cell membrane fusion, the coiled coil regions (heptad repeats) assume a trimer-of-hairpins structure, positioning the fusion peptide in close proximity to the C-terminal region of the ectodomain. The formation of this structure appears to drive apposition and subsequent fusion of membranes. The sequence is that of Syncytin-1 (ERVW-1) from Pan troglodytes (Chimpanzee).